A 269-amino-acid polypeptide reads, in one-letter code: GTP cyclohydrolase FolE2 (269 aa).

This sequence belongs to the GTP cyclohydrolase IV family.

It carries out the reaction GTP + H2O = 7,8-dihydroneopterin 3'-triphosphate + formate + H(+). It functions in the pathway cofactor biosynthesis; 7,8-dihydroneopterin triphosphate biosynthesis; 7,8-dihydroneopterin triphosphate from GTP: step 1/1. In terms of biological role, converts GTP to 7,8-dihydroneopterin triphosphate. This is GTP cyclohydrolase FolE2 from Burkholderia vietnamiensis (strain G4 / LMG 22486) (Burkholderia cepacia (strain R1808)).